The sequence spans 162 residues: Ribosome maturation factor RimP (162 aa).

It belongs to the RimP family.

The protein localises to the cytoplasm. Functionally, required for maturation of 30S ribosomal subunits. The protein is Ribosome maturation factor RimP of Leptospira interrogans serogroup Icterohaemorrhagiae serovar copenhageni (strain Fiocruz L1-130).